Here is a 443-residue protein sequence, read N- to C-terminus: 23S rRNA (uracil(1939)-C(5))-methyltransferase RlmD (443 aa).

The TRAM domain maps to K8–E66. Residues C79, C85, C88, and C167 each coordinate [4Fe-4S] cluster. The S-adenosyl-L-methionine site is built by Q276, F305, N310, E326, D353, and D374. C400 functions as the Nucleophile in the catalytic mechanism.

The protein belongs to the class I-like SAM-binding methyltransferase superfamily. RNA M5U methyltransferase family. RlmD subfamily.

The enzyme catalyses uridine(1939) in 23S rRNA + S-adenosyl-L-methionine = 5-methyluridine(1939) in 23S rRNA + S-adenosyl-L-homocysteine + H(+). Catalyzes the formation of 5-methyl-uridine at position 1939 (m5U1939) in 23S rRNA. The protein is 23S rRNA (uracil(1939)-C(5))-methyltransferase RlmD of Methylococcus capsulatus (strain ATCC 33009 / NCIMB 11132 / Bath).